The primary structure comprises 419 residues: rRNA methyltransferase 3, mitochondrial (419 aa).

A mitochondrion-targeting transit peptide spans 1 to 39 (MAALCGGMLRGCILKPLGLSGSLQLKRNVRALRRTPVRV). The interval 42 to 68 (ADEEGRERKQVEASRQRQPRQNESQAC) is disordered. Residues 44 to 56 (EEGRERKQVEASR) are compositionally biased toward basic and acidic residues. S-adenosyl-L-methionine is bound by residues G357, I381, and L390.

This sequence belongs to the class IV-like SAM-binding methyltransferase superfamily. RNA methyltransferase TrmH family.

It localises to the mitochondrion. It catalyses the reaction a uridine in rRNA + S-adenosyl-L-methionine = a 2'-O-methyluridine in rRNA + S-adenosyl-L-homocysteine + H(+). Its function is as follows. S-adenosyl-L-methionine-dependent 2'-O-ribose methyltransferase that catalyzes the formation of 2'-O-methylguanosine at position 1370 (Gm1370) in the mitochondrial large subunit ribosomal RNA (mtLSU rRNA), a conserved modification in the peptidyl transferase domain of the mtLSU rRNA. Also required for formation of 2'-O-methyluridine at position 1369 (Um1369) mediated by MRM2. The chain is rRNA methyltransferase 3, mitochondrial from Xenopus laevis (African clawed frog).